The following is a 555-amino-acid chain: Energy-dependent translational throttle protein EttA (555 aa).

ABC transporter domains follow at residues 6 to 259 (YTMH…AQEA) and 324 to 550 (LEVS…RIKY). 39-46 (GLNGAGKS) provides a ligand contact to ATP. The segment at 95 to 139 (SEVVNALKRLDEVYALYADPDADFDKLAAEQGRLEEIIQAHDGHN) is arm. Residues 242–322 (GNYSSWLEQK…IPPGPRLGDK (81 aa)) are ptIM. ATP is bound at residue 356 to 363 (GPNGAGKS).

This sequence belongs to the ABC transporter superfamily. ABCF family. Translational throttle EttA subfamily. In terms of assembly, monomer. Probably contacts ribosomal proteins L1, L5, L33 and S7, the 16S and 23S rRNA and the P-site containing tRNA(fMet).

It is found in the cytoplasm. The enzyme catalyses ATP + H2O = ADP + phosphate + H(+). Its function is as follows. A translation factor that gates the progression of the 70S ribosomal initiation complex (IC, containing tRNA(fMet) in the P-site) into the translation elongation cycle by using a mechanism sensitive to the ATP/ADP ratio. Binds to the 70S ribosome E-site where it modulates the state of the translating ribosome during subunit translocation. ATP hydrolysis probably frees it from the ribosome, which can enter the elongation phase. This chain is Energy-dependent translational throttle protein EttA, found in Escherichia coli O157:H7.